The chain runs to 256 residues: Probable transcriptional regulatory protein A1I_03240 (256 aa).

The tract at residues M1–R21 is disordered.

The protein belongs to the TACO1 family.

It is found in the cytoplasm. This is Probable transcriptional regulatory protein A1I_03240 from Rickettsia bellii (strain OSU 85-389).